The sequence spans 185 residues: Ribosome-recycling factor (185 aa).

This sequence belongs to the RRF family.

The protein localises to the cytoplasm. Responsible for the release of ribosomes from messenger RNA at the termination of protein biosynthesis. May increase the efficiency of translation by recycling ribosomes from one round of translation to another. In Corynebacterium efficiens (strain DSM 44549 / YS-314 / AJ 12310 / JCM 11189 / NBRC 100395), this protein is Ribosome-recycling factor.